We begin with the raw amino-acid sequence, 142 residues long: Large ribosomal subunit protein uL13 (142 aa).

This sequence belongs to the universal ribosomal protein uL13 family. In terms of assembly, part of the 50S ribosomal subunit.

Functionally, this protein is one of the early assembly proteins of the 50S ribosomal subunit, although it is not seen to bind rRNA by itself. It is important during the early stages of 50S assembly. The polypeptide is Large ribosomal subunit protein uL13 (Coxiella burnetii (strain CbuG_Q212) (Coxiella burnetii (strain Q212))).